We begin with the raw amino-acid sequence, 311 residues long: Aspartate carbamoyltransferase catalytic subunit (311 aa).

Residues R55 and T56 each coordinate carbamoyl phosphate. K85 contributes to the L-aspartate binding site. The carbamoyl phosphate site is built by R106, H135, and Q138. Residues R168 and R230 each coordinate L-aspartate. The carbamoyl phosphate site is built by L268 and P269.

The protein belongs to the aspartate/ornithine carbamoyltransferase superfamily. ATCase family. In terms of assembly, heterododecamer (2C3:3R2) of six catalytic PyrB chains organized as two trimers (C3), and six regulatory PyrI chains organized as three dimers (R2).

It catalyses the reaction carbamoyl phosphate + L-aspartate = N-carbamoyl-L-aspartate + phosphate + H(+). The protein operates within pyrimidine metabolism; UMP biosynthesis via de novo pathway; (S)-dihydroorotate from bicarbonate: step 2/3. Functionally, catalyzes the condensation of carbamoyl phosphate and aspartate to form carbamoyl aspartate and inorganic phosphate, the committed step in the de novo pyrimidine nucleotide biosynthesis pathway. This Yersinia pseudotuberculosis serotype O:1b (strain IP 31758) protein is Aspartate carbamoyltransferase catalytic subunit.